Consider the following 326-residue polypeptide: Aldo-keto reductase family 1 member D1 (326 aa).

Residues 22–26 and D53 contribute to the NADP(+) site; that span reads GLGTY. A substrate-binding site is contributed by Y26. Positions 58, 89, 120, and 132 each coordinate substrate. Y58 acts as the Proton donor in catalysis. NADP(+) contacts are provided by residues 169–170, Q193, and 219–224; these read SN and YSPLGT. W230 is a substrate binding site. 273 to 283 provides a ligand contact to NADP(+); it reads KSFNPERIKEN.

Belongs to the aldo/keto reductase family.

It is found in the cytoplasm. It catalyses the reaction 5beta-cholestan-3-one + NADP(+) = cholest-4-en-3-one + NADPH + H(+). The enzyme catalyses 4,5beta-dihydrocortisone + NADP(+) = cortisone + NADPH + H(+). It carries out the reaction cortisol + NADPH + H(+) = 5beta-dihydrocortisol + NADP(+). The catalysed reaction is corticosterone + NADPH + H(+) = 5beta-dihydrocorticosterone + NADP(+). It catalyses the reaction 7alpha,12alpha-dihydroxycholest-4-en-3-one + NADPH + H(+) = 7alpha,12alpha-dihydroxy-5beta-cholestan-3-one + NADP(+). The enzyme catalyses 7alpha-hydroxycholest-4-en-3-one + NADPH + H(+) = 7alpha-hydroxy-5beta-cholestan-3-one + NADP(+). It carries out the reaction epitestosterone + NADPH + H(+) = 5beta-dihydroepitestosterone + NADP(+). The catalysed reaction is androst-4-ene-3,17-dione + NADPH + H(+) = 5beta-androstane-3,17-dione + NADP(+). It catalyses the reaction progesterone + NADPH + H(+) = 5beta-pregnan-3,20-dione + NADP(+). The enzyme catalyses 21-hydroxyprogesterone + NADPH + H(+) = 5beta-dihydrodeoxycorticosterone + NADP(+). It carries out the reaction aldosterone + NADPH + H(+) = 5beta-dihydroaldosterone + NADP(+). The catalysed reaction is 17beta-hydroxyandrosta-1,4-dien-3-one + NADPH + H(+) = 17beta-hydroxy-5beta-androst-1-en-3-one + NADP(+). It catalyses the reaction 17beta-hydroxyestr-4-en-3-one + NADPH + H(+) = 17beta-hydroxy-5beta-estran-3-one + NADP(+). The enzyme catalyses 5beta-dihydrotestosterone + NADP(+) = testosterone + NADPH + H(+). It carries out the reaction androst-4-ene-3,11,17-trione + NADPH + H(+) = 17beta-hydroxyandrost-4-ene-3,11-dione + NADP(+). Its activity is regulated as follows. Subject to inhibition by high substrate concentrations. Inhibited by testosterone concentrations above 10 uM. Inhibited by the primary and secondary bile acids chenodeoxycholic acid and ursodeoxycholic acid. Catalyzes the stereospecific NADPH-dependent reduction of the C4-C5 double bond of bile acid intermediates and steroid hormones carrying a delta(4)-3-one structure to yield an A/B cis-ring junction. This cis-configuration is crucial for bile acid biosynthesis and plays important roles in steroid metabolism. Capable of reducing a broad range of delta-(4)-3-ketosteroids from C18 (such as, 17beta-hydroxyestr-4-en-3-one) to C27 (such as, 7alpha-hydroxycholest-4-en-3-one). This Oryctolagus cuniculus (Rabbit) protein is Aldo-keto reductase family 1 member D1 (AKR1D1).